A 459-amino-acid polypeptide reads, in one-letter code: ATP-dependent 6-phosphofructokinase (459 aa).

ATP is bound by residues Gly89, 154 to 155 (RG), and 179 to 182 (GDGG). Residue Asp180 participates in Mg(2+) binding. Residues 208–210 (TID), 253–255 (MGR), Glu309, and 368–371 (YAIR) contribute to the substrate site. The active-site Proton acceptor is Asp210.

Belongs to the phosphofructokinase type A (PFKA) family. PPi-dependent PFK group II subfamily. Atypical ATP-dependent clade 'X' sub-subfamily. Homodimer. It depends on Mg(2+) as a cofactor.

It is found in the cytoplasm. It catalyses the reaction beta-D-fructose 6-phosphate + ATP = beta-D-fructose 1,6-bisphosphate + ADP + H(+). It participates in carbohydrate degradation; glycolysis; D-glyceraldehyde 3-phosphate and glycerone phosphate from D-glucose: step 3/4. AMP causes 20-40% inhibition and diphosphate causes 20-50% inhibition. ADP, citrate, PEP and FBP have no effect. Catalyzes the phosphorylation of D-fructose 6-phosphate to fructose 1,6-bisphosphate by ATP, the first committing step of glycolysis. The sequence is that of ATP-dependent 6-phosphofructokinase from Amycolatopsis methanolica.